The sequence spans 179 residues: Inner membrane-spanning protein YciB (179 aa).

A run of 5 helical transmembrane segments spans residues 3 to 23 (FLFD…FGIY), 49 to 69 (PMQW…ILLH), 76 to 96 (WKPT…VIGW), 121 to 141 (VAWA…AYQF), and 149 to 169 (FKLF…SIWL).

Belongs to the YciB family.

It localises to the cell inner membrane. Its function is as follows. Plays a role in cell envelope biogenesis, maintenance of cell envelope integrity and membrane homeostasis. The chain is Inner membrane-spanning protein YciB from Cupriavidus metallidurans (strain ATCC 43123 / DSM 2839 / NBRC 102507 / CH34) (Ralstonia metallidurans).